The following is a 100-amino-acid chain: Urease subunit gamma (100 aa).

The protein belongs to the urease gamma subunit family. As to quaternary structure, heterotrimer of UreA (gamma), UreB (beta) and UreC (alpha) subunits. Three heterotrimers associate to form the active enzyme.

It localises to the cytoplasm. The enzyme catalyses urea + 2 H2O + H(+) = hydrogencarbonate + 2 NH4(+). It functions in the pathway nitrogen metabolism; urea degradation; CO(2) and NH(3) from urea (urease route): step 1/1. This is Urease subunit gamma from Mycolicibacterium vanbaalenii (strain DSM 7251 / JCM 13017 / BCRC 16820 / KCTC 9966 / NRRL B-24157 / PYR-1) (Mycobacterium vanbaalenii).